The chain runs to 70 residues: Bowman-Birk type proteinase inhibitor A7 (70 aa).

4 cysteine pairs are disulfide-bonded: C12/C31, C18/C29, C38/C45, and C42/C59.

It belongs to the Bowman-Birk serine protease inhibitor family. Expressed in bulb (at protein level).

Functionally, serine protease inhibitor. Strongly inhibits trypsin (Ki = 7.1 nM) and almost completely inhibits elastase. Also inhibits chymotrypsin (Ki = 19 nM). Does not inhibit bacterial subtilisin. This is Bowman-Birk type proteinase inhibitor A7 from Hyacinthus orientalis (Common hyacinth).